Here is a 205-residue protein sequence, read N- to C-terminus: Cbp/p300-interacting transactivator 3 (205 aa).

This sequence belongs to the CITED family.

It is found in the nucleus. In terms of biological role, acts as a transcriptional coactivator. Enhances estrogen-dependent transactivation mediated by estrogen receptors. The sequence is that of Cbp/p300-interacting transactivator 3 (CITED3) from Gallus gallus (Chicken).